Here is a 583-residue protein sequence, read N- to C-terminus: Potassium-transporting ATPase potassium-binding subunit (583 aa).

The next 10 membrane-spanning stretches (helical) occupy residues 3 to 23 (NIIW…WPLG), 66 to 86 (MACV…LLMA), 135 to 155 (GLTV…FALI), 177 to 197 (VLYI…EQGV), 266 to 286 (LEML…GAKI), 293 to 313 (VAIF…TVQA), 402 to 422 (GLYG…LMVG), 440 to 460 (AVVV…LMCL), 506 to 526 (VLLG…ILAM), and 549 to 569 (LFIF…FFPA).

This sequence belongs to the KdpA family. In terms of assembly, the system is composed of three essential subunits: KdpA, KdpB and KdpC.

The protein resides in the cell inner membrane. Functionally, part of the high-affinity ATP-driven potassium transport (or Kdp) system, which catalyzes the hydrolysis of ATP coupled with the electrogenic transport of potassium into the cytoplasm. This subunit binds the periplasmic potassium ions and delivers the ions to the membrane domain of KdpB through an intramembrane tunnel. In Desulfovibrio desulfuricans (strain ATCC 27774 / DSM 6949 / MB), this protein is Potassium-transporting ATPase potassium-binding subunit.